A 309-amino-acid polypeptide reads, in one-letter code: Taste receptor type 2 member 8 (309 aa).

The Extracellular portion of the chain corresponds to 1 to 7; sequence MFSPADN. A helical membrane pass occupies residues 8-28; the sequence is IFIILITGEFILGILGNGYIA. The Cytoplasmic portion of the chain corresponds to 29–50; that stretch reads LVNWIDWIKKKKISTVDYILTN. A helical transmembrane segment spans residues 51–71; the sequence is LVIARICLISVMVVNGIVIVL. Residues 72 to 82 are Extracellular-facing; that stretch reads NPDVYTKNKQQ. Residues 83 to 103 form a helical membrane-spanning segment; sequence IVIFTFWTFANYLNMWITTCL. The Cytoplasmic segment spans residues 104 to 131; that stretch reads NVFYFLKIASSSHPLFLWLKWKIDMVVH. Residues 132-152 traverse the membrane as a helical segment; that stretch reads WILLGCFAISLLVSLIAAIVL. Topologically, residues 153 to 184 are extracellular; it reads SCDYRFHAIAKHKRNITEMFHVSKXPYFEPLT. N-linked (GlcNAc...) asparagine glycosylation occurs at Asn167. A helical membrane pass occupies residues 185–205; sequence LFNLFAIVPFIVSLISFFLLV. Over 206 to 239 the chain is Cytoplasmic; the sequence is RSLWRHTKQIKLYATGSRDPSTEVHVRAIKTMTS. The helical transmembrane segment at 240–260 threads the bilayer; it reads FIFFFFLYFISSILMTFSYLM. Topologically, residues 261-266 are extracellular; it reads TKYKLA. The helical transmembrane segment at 267 to 287 threads the bilayer; that stretch reads VEFGEIAAILYPLGHSLILIV. Topologically, residues 288 to 309 are cytoplasmic; it reads LNNKLRQIFVRMLTCRKIACVI.

Belongs to the G-protein coupled receptor T2R family.

The protein localises to the membrane. Receptor that may play a role in the perception of bitterness and is gustducin-linked. May play a role in sensing the chemical composition of the gastrointestinal content. The activity of this receptor may stimulate alpha gustducin, mediate PLC-beta-2 activation and lead to the gating of TRPM5. In Pan paniscus (Pygmy chimpanzee), this protein is Taste receptor type 2 member 8 (TAS2R8).